The chain runs to 157 residues: Arginine repressor (157 aa).

The protein belongs to the ArgR family.

Its subcellular location is the cytoplasm. It participates in amino-acid biosynthesis; L-arginine biosynthesis [regulation]. Its function is as follows. Regulates arginine biosynthesis genes. In Colwellia psychrerythraea (strain 34H / ATCC BAA-681) (Vibrio psychroerythus), this protein is Arginine repressor.